The chain runs to 63 residues: MKANELREKSAEELNTELLNLLREQFNLRMQASSGQLQQTHLLKQVRRNVARVKTLLTEKAGA.

This sequence belongs to the universal ribosomal protein uL29 family.

In Sodalis glossinidius (strain morsitans), this protein is Large ribosomal subunit protein uL29.